Consider the following 266-residue polypeptide: UPF0294 protein YafD (266 aa).

It belongs to the UPF0294 family.

It localises to the cytoplasm. This Salmonella dublin (strain CT_02021853) protein is UPF0294 protein YafD.